A 293-amino-acid polypeptide reads, in one-letter code: GPN-loop GTPase 3 (293 aa).

13–18 (GAGKST) contacts GTP. The Gly-Pro-Asn (GPN)-loop; involved in dimer interface motif lies at 70 to 72 (GPN). 176-179 (SKMD) contacts GTP. Residues 272–281 (HEAQEPREPN) show a composition bias toward basic and acidic residues. Positions 272-293 (HEAQEPREPNDEQDVDYEDADI) are disordered. Over residues 282 to 293 (DEQDVDYEDADI) the composition is skewed to acidic residues.

Belongs to the GPN-loop GTPase family. In terms of assembly, heterodimers with gpn1 or gpn2. Binds to RNA polymerase II (RNAPII).

Its function is as follows. Small GTPase required for proper nuclear import of RNA polymerase II and III (RNAPII and RNAPIII). May act at an RNAP assembly step prior to nuclear import. This Aspergillus fumigatus (strain ATCC MYA-4609 / CBS 101355 / FGSC A1100 / Af293) (Neosartorya fumigata) protein is GPN-loop GTPase 3.